We begin with the raw amino-acid sequence, 188 residues long: Protein GrpE (188 aa).

Basic and acidic residues predominate over residues M1–Q16. Residues M1 to E31 are disordered.

This sequence belongs to the GrpE family. As to quaternary structure, homodimer.

Its subcellular location is the cytoplasm. Its function is as follows. Participates actively in the response to hyperosmotic and heat shock by preventing the aggregation of stress-denatured proteins, in association with DnaK and GrpE. It is the nucleotide exchange factor for DnaK and may function as a thermosensor. Unfolded proteins bind initially to DnaJ; upon interaction with the DnaJ-bound protein, DnaK hydrolyzes its bound ATP, resulting in the formation of a stable complex. GrpE releases ADP from DnaK; ATP binding to DnaK triggers the release of the substrate protein, thus completing the reaction cycle. Several rounds of ATP-dependent interactions between DnaJ, DnaK and GrpE are required for fully efficient folding. This Bacillus cereus (strain G9842) protein is Protein GrpE.